The primary structure comprises 432 residues: 3-phosphoshikimate 1-carboxyvinyltransferase (432 aa).

3 residues coordinate 3-phosphoshikimate: Lys23, Ser24, and Arg28. Lys23 lines the phosphoenolpyruvate pocket. Residues Gly95 and Arg123 each coordinate phosphoenolpyruvate. Ser167, Gln169, Asp317, and Lys344 together coordinate 3-phosphoshikimate. Residue Gln169 coordinates phosphoenolpyruvate. The Proton acceptor role is filled by Asp317. Residues Arg348 and Arg390 each contribute to the phosphoenolpyruvate site.

It belongs to the EPSP synthase family. Monomer.

The protein resides in the cytoplasm. The catalysed reaction is 3-phosphoshikimate + phosphoenolpyruvate = 5-O-(1-carboxyvinyl)-3-phosphoshikimate + phosphate. It functions in the pathway metabolic intermediate biosynthesis; chorismate biosynthesis; chorismate from D-erythrose 4-phosphate and phosphoenolpyruvate: step 6/7. Catalyzes the transfer of the enolpyruvyl moiety of phosphoenolpyruvate (PEP) to the 5-hydroxyl of shikimate-3-phosphate (S3P) to produce enolpyruvyl shikimate-3-phosphate and inorganic phosphate. The polypeptide is 3-phosphoshikimate 1-carboxyvinyltransferase (Staphylococcus carnosus (strain TM300)).